The chain runs to 512 residues: Lysine--tRNA ligase (512 aa).

Residues Glu-408 and Glu-415 each coordinate Mg(2+).

Belongs to the class-II aminoacyl-tRNA synthetase family. As to quaternary structure, homodimer. It depends on Mg(2+) as a cofactor.

It localises to the cytoplasm. The enzyme catalyses tRNA(Lys) + L-lysine + ATP = L-lysyl-tRNA(Lys) + AMP + diphosphate. The chain is Lysine--tRNA ligase from Prochlorococcus marinus (strain MIT 9301).